A 309-amino-acid chain; its full sequence is Olfactory receptor 6C4 (309 aa).

Residues 1–23 (MKNRTMFGEFILLGLTNQPELQV) lie on the Extracellular side of the membrane. Residue Asn-3 is glycosylated (N-linked (GlcNAc...) asparagine). Residues 24 to 44 (MIFIFLFLTYMLSILGNLTII) traverse the membrane as a helical segment. At 45 to 52 (TLTLLDPH) the chain is on the cytoplasmic side. The chain crosses the membrane as a helical span at residues 53 to 73 (LQTPMYFFLRNFSFLEISFTS). At 74 to 97 (IFIPRFLTSMTTGNKVISFAGCLT) the chain is on the extracellular side. Cys-95 and Cys-187 form a disulfide bridge. The chain crosses the membrane as a helical span at residues 98 to 118 (QYFFAIFLGATEFYLLASMSY). Over 119–137 (DRYVAICKPLHYLTIMSSR) the chain is Cytoplasmic. The chain crosses the membrane as a helical span at residues 138–158 (VCIQLVFCSWLGGFLAILPPI). The Extracellular portion of the chain corresponds to 159–195 (ILMTQVDFCVSNILNHYYCDYGPLVELACSDTSLLEL). The chain crosses the membrane as a helical span at residues 196–215 (MVILLAVVTLMVTLVLVTLS). The Cytoplasmic segment spans residues 216-235 (YTYIIRTILRIPSAQQRTKA). A helical membrane pass occupies residues 236–256 (FSTCSSHMIVISLSYGSCMFM). Over 257 to 269 (YINPSAKEGGAFN) the chain is Extracellular. A helical transmembrane segment spans residues 270–290 (KGIAVLITSVTPLLNPFIYTL). The Cytoplasmic portion of the chain corresponds to 291 to 309 (RNQQVKQAFKDSVKKIVKL).

Belongs to the G-protein coupled receptor 1 family.

The protein localises to the cell membrane. Odorant receptor. The chain is Olfactory receptor 6C4 (OR6C4) from Homo sapiens (Human).